Reading from the N-terminus, the 380-residue chain is Ubiquitin-like protein 7 (380 aa).

A Ubiquitin-like domain is found at 18–98 (TPKSILRLPE…VLRKSWPEPD (81 aa)). Positions 200 to 313 (APMPGTDSSS…SSGVQSGTPI (114 aa)) are disordered. The segment covering 206–221 (DSSSRSMPSSSYRDMP) has biased composition (low complexity). Serine 230 carries the phosphoserine modification. 2 stretches are compositionally biased toward low complexity: residues 240–253 (TRST…SSRP) and 270–293 (SELA…TPGT). The span at 294–313 (QGHSSGTSPMSSGVQSGTPI) shows a compositional bias: polar residues. The region spanning 333 to 377 (SLQSQWQPQLQQLRDMGIQDDELSLRALQATGGDIQAALELIFAG) is the UBA domain.

In terms of assembly, binds ubiquitin. Interacts with MAVS; this interaction enhances TRIM21-dependent 'Lys-27'-linked polyubiquitination of MAVS. In terms of processing, deubiquitinated by OTUD4 which stabilizes UBL7 expression. As to expression, ubiquitous. Highly expressed in heart, skeletal muscle, testis, thyroid and adrenal gland.

Functionally, interferon-stimulated protein that positively regulates RNA virus-triggered innate immune signaling. Mechanistically, promotes 'Lys-27'-linked polyubiquitination of MAVS through TRIM21 leading to enhanced the IFN signaling pathway. This chain is Ubiquitin-like protein 7 (UBL7), found in Homo sapiens (Human).